The sequence spans 306 residues: Homoserine O-acetyltransferase (306 aa).

Cys-142 (acyl-thioester intermediate) is an active-site residue. Lys-163 and Ser-194 together coordinate substrate. The Proton acceptor role is filled by His-237. The active site involves Glu-239. A substrate-binding site is contributed by Arg-251.

The protein belongs to the MetA family.

Its subcellular location is the cytoplasm. The enzyme catalyses L-homoserine + acetyl-CoA = O-acetyl-L-homoserine + CoA. The protein operates within amino-acid biosynthesis; L-methionine biosynthesis via de novo pathway; O-acetyl-L-homoserine from L-homoserine: step 1/1. Functionally, transfers an acetyl group from acetyl-CoA to L-homoserine, forming acetyl-L-homoserine. This Clostridium tetani (strain Massachusetts / E88) protein is Homoserine O-acetyltransferase.